A 107-amino-acid chain; its full sequence is N(4)-acetylcytidine amidohydrolase (107 aa).

The ASCH domain occupies 6–102 (TFYRRFQADI…RLYVISFSLV (97 aa)). Residue lysine 20 is the Proton acceptor of the active site. Threonine 23 functions as the Nucleophile in the catalytic mechanism. Residue glutamate 73 is the Proton donor of the active site.

It belongs to the N(4)-acetylcytidine amidohydrolase family.

It catalyses the reaction N(4)-acetylcytidine + H2O = cytidine + acetate + H(+). The enzyme catalyses N(4)-acetyl-2'-deoxycytidine + H2O = 2'-deoxycytidine + acetate + H(+). The catalysed reaction is N(4)-acetylcytosine + H2O = cytosine + acetate + H(+). In terms of biological role, catalyzes the hydrolysis of N(4)-acetylcytidine (ac4C). This chain is N(4)-acetylcytidine amidohydrolase, found in Edwardsiella ictaluri (strain 93-146).